Here is a 78-residue protein sequence, read N- to C-terminus: Large ribosomal subunit protein bL28 (78 aa).

Residues 1 to 20 (MSRVCQVTGKRPVTGNNRSH) form a disordered region.

It belongs to the bacterial ribosomal protein bL28 family.

The sequence is that of Large ribosomal subunit protein bL28 from Photobacterium profundum (strain SS9).